We begin with the raw amino-acid sequence, 333 residues long: Heat shock transcription factor, X-linked member 4 (333 aa).

A disordered region spans residues 1 to 66 (MASQNTEQEY…QDNSPPEDRN (66 aa)). Residues 29–39 (GSSPDPNPDSS) show a composition bias toward low complexity. Over residues 49-60 (AMSQDPGSQDNS) the composition is skewed to polar residues. The DNA-binding element occupies 79–182 (FRLSFPRKLW…PRLLENIQRK (104 aa)). Residues 227–275 (QGAPSVQGPSGTQSFRRSGMWSKKSATRHPLGNGPPQEPNGPSWEGTSG) are disordered. Residues 228 to 242 (GAPSVQGPSGTQSFR) are compositionally biased toward polar residues.

It belongs to the HSF family.

The protein resides in the nucleus. This is Heat shock transcription factor, X-linked member 4 from Homo sapiens (Human).